The chain runs to 578 residues: Acyl-CoA ligase AFT1-1 (578 aa).

ATP contacts are provided by residues 210–218 (SSGTSGAQK), 350–355 (QCYGAT), aspartate 438, arginine 457, and lysine 554. Positions 281 to 350 (GVEDLLSIVE…RHHPTWKIKQ (70 aa)) are SBD1. The interval 351 to 413 (CYGATEAGTA…VSSPSLAIGY (63 aa)) is SBD2. The short motif at 576–578 (SKI) is the Peroxisomal targeting signal type 1 element.

This sequence belongs to the ATP-dependent AMP-binding enzyme family.

It is found in the peroxisome. Its pathway is mycotoxin biosynthesis. Acyl-CoA ligase; part of the gene clusters that mediate the biosynthesis of the host-selective toxins (HSTs) AF-toxins responsible for Alternaria black spot of strawberry disease by the strawberry pathotype. AF-toxin I and III are valine derivatives of 2,3-dyhydroxy-isovaleric acid and 2-hydroxy-isovaleric acid respectively, while AF II is an isoleucine derivative of 2-hydroxy-valeric acid. These derivatives are bound to a 9,10-epoxy-8-hydroxy-9-methyl-decatrienoic acid (EDA) moiety. On cellular level, AF-toxins affect plasma membrane of susceptible cells and cause a sudden increase in loss of K(+) after a few minutes of toxin treatment. The aldo-keto reductase AFTS1 catalyzes the conversion of 2-keto-isovaleric acid (2-KIV) to 2-hydroxy-isovaleric acid (2-HIV) by reduction of its ketone to an alcohol. The acyl-CoA ligase AFT1, the hydrolase AFT2 and the enoyl-CoA hydratases AFT3 and AFT6, but also the polyketide synthase AFT9, the acyl-CoA dehydrogenase AFT10, the cytochrome P450 monooxygenase AFT11 and the oxidoreductase AFT12 are all involved in the biosynthesis of the AK-, AF- and ACT-toxin common EDA structural moiety. The exact role of each enzyme, and of additional enzymes identified within the AF-toxin clusters have still to be determined. This Alternaria alternata (Alternaria rot fungus) protein is Acyl-CoA ligase AFT1-1.